The chain runs to 806 residues: Leucine--tRNA ligase (806 aa).

A 'HIGH' region motif is present at residues 54 to 64; the sequence is SYPSGDLHMGH. The 'KMSKS' region signature appears at 571–575; that stretch reads KMSKS. Residue lysine 574 coordinates ATP.

Belongs to the class-I aminoacyl-tRNA synthetase family.

The protein resides in the cytoplasm. It catalyses the reaction tRNA(Leu) + L-leucine + ATP = L-leucyl-tRNA(Leu) + AMP + diphosphate. The polypeptide is Leucine--tRNA ligase (Tropheryma whipplei (strain TW08/27) (Whipple's bacillus)).